The following is a 262-amino-acid chain: 2-keto-4-pentenoate hydratase (262 aa).

Belongs to the hydratase/decarboxylase family. MhpD subfamily. It depends on a divalent metal cation as a cofactor.

The catalysed reaction is (S)-4-hydroxy-2-oxopentanoate = (2Z)-2-hydroxypenta-2,4-dienoate + H2O. The protein operates within aromatic compound metabolism; 3-phenylpropanoate degradation. Catalyzes the conversion of 2-hydroxypentadienoic acid (enolic form of 2-oxopent-4-enoate) to 4-hydroxy-2-ketopentanoic acid. The chain is 2-keto-4-pentenoate hydratase from Paraburkholderia phymatum (strain DSM 17167 / CIP 108236 / LMG 21445 / STM815) (Burkholderia phymatum).